Consider the following 146-residue polypeptide: Angiogenin (146 aa).

The N-terminal stretch at 1-24 is a signal peptide; that stretch reads MVMGLGLFLLVFMLGLGLTPPTLA. A Pyrrolidone carboxylic acid modification is found at glutamine 25. Histidine 37 serves as the catalytic Proton acceptor. Arginine 45 provides a ligand contact to tRNA. Disulfide bonds link cysteine 50–cysteine 105, cysteine 63–cysteine 116, and cysteine 81–cysteine 131. Residues 55-59 carry the Nucleolar localization signal motif; sequence RRRHL. TRNA-binding residues include cysteine 105 and isoleucine 127. Histidine 138 (proton donor) is an active-site residue.

This sequence belongs to the pancreatic ribonuclease family. As to quaternary structure, homodimer. Interacts with RNH1; inhibiting ANG ribonuclease activity. Interacts with PCNA.

The protein resides in the secreted. It localises to the nucleus. It is found in the nucleolus. Its subcellular location is the cytoplasm. The protein localises to the stress granule. With respect to regulation, has weak tRNA ribonuclease activity by itself due to partial autoinhibition by its C-terminus, which folds into a short alpha-helix that partially occludes the substrate-binding site. In absence of stress, the ribonuclease activity is inhibited by RNH1 in the cytoplasm. In response to stress, dissociates from RNH1 in the cytoplasm and associates with cytoplasmic ribosomes with vacant A-sites: ribosomes directly activate the tRNA ribonuclease activity of ANG by refolding the C-terminal alpha-helix. In response to stress, the angiogenic activity of ANG is inhibited by RNH1 in the nucleus. In terms of biological role, secreted ribonuclease that can either promote or restrict cell proliferation of target cells, depending on the context. Endocytosed in target cells via its receptor PLXNB2 and translocates to the cytoplasm or nucleus. Under stress conditions, localizes to the cytoplasm and promotes the assembly of stress granules (SGs): specifically cleaves a subset of tRNAs within anticodon loops to produce tRNA-derived stress-induced fragments (tiRNAs), resulting in translation repression and inhibition of cell proliferation. tiRNas also prevent formation of apoptosome, thereby promoting cell survival. Preferentially cleaves RNAs between a pyrimidine and an adenosine residue, suggesting that it cleaves the anticodon loop of tRNA(Ala) (32-UUAGCAU-38) after positions 33 and 36. Cleaves a subset of tRNAs, including tRNA(Ala), tRNA(Glu), tRNA(Gly), tRNA(Lys), tRNA(Val), tRNA(His), tRNA(Asp) and tRNA(Sec). Under growth conditions and in differentiated cells, translocates to the nucleus and stimulates ribosomal RNA (rRNA) transcription, including that containing the initiation site sequences of 45S rRNA, thereby promoting cell growth and proliferation. Angiogenin induces vascularization of normal and malignant tissues via its ability to promote rRNA transcription. Involved in hematopoietic stem and progenitor cell (HSPC) growth and survival by promoting rRNA transcription in growth conditions and inhibiting translation in response to stress, respectively. Mediates the crosstalk between myeloid and intestinal epithelial cells to protect the intestinal epithelial barrier integrity: secreted by myeloid cells and promotes intestinal epithelial cells proliferation and survival. Also mediates osteoclast-endothelial cell crosstalk in growing bone: produced by osteoclasts and protects the neighboring vascular cells against senescence by promoting rRNA transcription. This Macaca mulatta (Rhesus macaque) protein is Angiogenin (ANG).